We begin with the raw amino-acid sequence, 56 residues long: PI-stichotoxin-Hmg3c (56 aa).

The BPTI/Kunitz inhibitor domain maps to 4–54 (CLEPKVVGPCTAYFPRFYFDSETGKCTPFIYGGCEGNGNNFETLHACRAIC). Cystine bridges form between Cys-4/Cys-54, Cys-13/Cys-37, and Cys-29/Cys-50.

This sequence belongs to the venom Kunitz-type family. Sea anemone type 2 potassium channel toxin subfamily. Post-translationally, contains three disulfide bonds.

The protein resides in the secreted. Its subcellular location is the nematocyst. Functionally, serine protease inhibitor that inhibits trypsin (Ki=73.8 nM) and chymotrypsin (Ki=993 nM). The protein is PI-stichotoxin-Hmg3c of Heteractis magnifica (Magnificent sea anemone).